The following is a 72-amino-acid chain: Conotoxin LiC53 (72 aa).

The signal sequence occupies residues 1–23 (MEKLTSLLLVAALLMLTQTLIQG). The propeptide occupies 24 to 41 (GGEDRPNKKFLQKIKSTA). 3 disulfides stabilise this stretch: Cys45-Cys59, Cys52-Cys63, and Cys58-Cys68.

Belongs to the conotoxin O2 superfamily. As to expression, expressed by the venom duct.

The protein resides in the secreted. The protein is Conotoxin LiC53 of Conus lividus (Livid cone).